The sequence spans 106 residues: Protein translation factor SUI1 homolog (106 aa).

This sequence belongs to the SUI1 family.

Its function is as follows. Additional factor that functions in concert with eIF-2 and the initiator tRNA in directing the ribosome to the proper start site of translation. This chain is Protein translation factor SUI1 homolog, found in Acanthamoeba polyphaga mimivirus (APMV).